The following is a 1380-amino-acid chain: DNA-directed RNA polymerase subunit beta (1380 aa).

This sequence belongs to the RNA polymerase beta chain family. As to quaternary structure, the RNAP catalytic core consists of 2 alpha, 1 beta, 1 beta' and 1 omega subunit. When a sigma factor is associated with the core the holoenzyme is formed, which can initiate transcription.

The enzyme catalyses RNA(n) + a ribonucleoside 5'-triphosphate = RNA(n+1) + diphosphate. Its function is as follows. DNA-dependent RNA polymerase catalyzes the transcription of DNA into RNA using the four ribonucleoside triphosphates as substrates. In Sinorhizobium fredii (strain NBRC 101917 / NGR234), this protein is DNA-directed RNA polymerase subunit beta.